A 233-amino-acid polypeptide reads, in one-letter code: Histone H1-I (233 aa).

Disordered regions lie at residues 1–55 and 115–233; these read MSDS…HPPV and TGAS…KKSK. The span at 17–29 shows a compositional bias: low complexity; it reads KAATPAKSPAKSP. The H15 domain maps to 51–125; the sequence is THPPVSEMVV…GASGSFKMPP (75 aa). Basic and acidic residues-rich tracts occupy residues 128–137 and 144–155; these read KKVDKPEAAP and PKREIEKKEKKV. Composition is skewed to basic residues over residues 172–186, 199–213, and 223–233; these read AAKK…KKAA, SPKK…KPTP, and AAAKKPAKKSK.

Belongs to the histone H1/H5 family.

The protein resides in the nucleus. Its subcellular location is the chromosome. In terms of biological role, histones H1 are necessary for the condensation of nucleosome chains into higher-order structures. The sequence is that of Histone H1-I from Glyptotendipes salinus (Midge).